The primary structure comprises 109 residues: Serine protease inhibitor (109 aa).

Residues 1 to 28 (MKMKLLQVHFVLLVSSSFLLGYTGMVTA) form the signal peptide. 5 disulfides stabilise this stretch: cysteine 43/cysteine 83, cysteine 52/cysteine 79, cysteine 58/cysteine 73, cysteine 62/cysteine 104, and cysteine 85/cysteine 98. Positions 43–104 (CRENEIFSQC…QGVCILENSC (62 aa)) constitute a TIL domain.

The protein belongs to the serine protease inhibitor-like (TIL domain-containing) family. As to expression, ubiquitously expressed (at protein level), including in venom glands. Found more precisely in the epidermis, fat body, gut, muscle, and venom of worker bees.

The protein resides in the secreted. Dual role peptide that functions as a broad-spectrum antimicrobial peptide and antifibrinolytic toxin. Inhibits trypsin (IC(50)=375 nM), plasmin (IC(50)=2140 nM), and microbial serine proteases (subtilisin A (IC(50)=294 nM) and proteinase K (IC(50)=459 nM)). Exhibits antifibrinolytic activity by binding and inhibiting plasmin. Does not inhibit chymotrypsin, elastase or thrombin. Binds to microbial cell wall carbohydrates (LPS, mannan and N-acetyl-D-glucosamine) and shows antimicrobial activity (MIC=4.1 uM against B.thuringiensis, MIC=4.95 uM against E.coli, MIC=9.6 uM against the fungus B.bassiana). Does not show hemolytic activity. This Bombus ignitus (Bumblebee) protein is Serine protease inhibitor.